Reading from the N-terminus, the 544-residue chain is Chaperonin GroEL (544 aa).

ATP contacts are provided by residues 30–33, 87–91, Gly414, 478–480, and Asp494; these read TLGP, DGTTT, and NAL.

Belongs to the chaperonin (HSP60) family. As to quaternary structure, forms a cylinder of 14 subunits composed of two heptameric rings stacked back-to-back. Interacts with the co-chaperonin GroES.

It localises to the cytoplasm. The catalysed reaction is ATP + H2O + a folded polypeptide = ADP + phosphate + an unfolded polypeptide.. In terms of biological role, together with its co-chaperonin GroES, plays an essential role in assisting protein folding. The GroEL-GroES system forms a nano-cage that allows encapsulation of the non-native substrate proteins and provides a physical environment optimized to promote and accelerate protein folding. The chain is Chaperonin GroEL from Pelotomaculum thermopropionicum (strain DSM 13744 / JCM 10971 / SI).